The chain runs to 419 residues: Hyaluronan synthase (419 aa).

Helical transmembrane passes span 8 to 28 (LIVL…MYLF), 33 to 53 (VGIY…LSFL), 318 to 338 (IVAL…VAIG), 345 to 365 (AIQL…IVAL), and 376 to 396 (PASF…LQPL).

This sequence belongs to the NodC/HAS family. Requires Mg(2+) as cofactor.

Its subcellular location is the cell membrane. The catalysed reaction is [hyaluronan](n) + UDP-N-acetyl-alpha-D-glucosamine = N-acetyl-beta-D-glucosaminyl-(1-&gt;4)-[hyaluronan](n) + UDP + H(+). It catalyses the reaction N-acetyl-beta-D-glucosaminyl-(1-&gt;4)-[hyaluronan](n) + UDP-alpha-D-glucuronate = [hyaluronan](n+1) + UDP + H(+). It participates in glycan biosynthesis; hyaluronan biosynthesis. Functionally, glycosaminoglycan synthesis. The hyaluronic acid capsule is involved in the pathogenicity of group A Streptococci; it may be the major virulence determinant. The sequence is that of Hyaluronan synthase (hasA) from Streptococcus pyogenes serotype M3 (strain ATCC BAA-595 / MGAS315).